The following is a 506-amino-acid chain: Histidine ammonia-lyase (506 aa).

The 5-imidazolinone (Ala-Gly) cross-link spans 143 to 145 (ASG). Residue Ser144 is modified to 2,3-didehydroalanine (Ser).

Belongs to the PAL/histidase family. Contains an active site 4-methylidene-imidazol-5-one (MIO), which is formed autocatalytically by cyclization and dehydration of residues Ala-Ser-Gly.

The protein resides in the cytoplasm. It carries out the reaction L-histidine = trans-urocanate + NH4(+). The protein operates within amino-acid degradation; L-histidine degradation into L-glutamate; N-formimidoyl-L-glutamate from L-histidine: step 1/3. This Salmonella arizonae (strain ATCC BAA-731 / CDC346-86 / RSK2980) protein is Histidine ammonia-lyase.